We begin with the raw amino-acid sequence, 548 residues long: Acetolactate synthase isozyme 2 large subunit (548 aa).

Residue Glu-47 participates in thiamine diphosphate binding. FAD contacts are provided by residues Arg-149, 251–272, and 294–313; these read HGTK…VGAR and DIDP…LQGD. Positions 377–457 are thiamine pyrophosphate binding; the sequence is QHQMWAAQHI…LKIVLLDNQR (81 aa). Mg(2+) contacts are provided by Asp-428 and Asn-455.

It belongs to the TPP enzyme family. In terms of assembly, tetramer of two large (IlvG) and two small (IlvM) chains. It depends on FAD as a cofactor. Mg(2+) serves as cofactor. Thiamine diphosphate is required as a cofactor.

The enzyme catalyses 2 pyruvate + H(+) = (2S)-2-acetolactate + CO2. It participates in amino-acid biosynthesis; L-isoleucine biosynthesis; L-isoleucine from 2-oxobutanoate: step 1/4. It functions in the pathway amino-acid biosynthesis; L-valine biosynthesis; L-valine from pyruvate: step 1/4. Inhibited by the herbicides chlorimuron ethyl, chlorsulfuron and imazapyr. Functionally, catalyzes the first step in the biosynthesis of branched-chain amino acids. This Escherichia coli (strain K12) protein is Acetolactate synthase isozyme 2 large subunit (ilvG).